Consider the following 430-residue polypeptide: 3-oxo-tetronate kinase (430 aa).

Residues Ser268, 366-369, and Gly410 contribute to the ATP site; that span reads GGET.

This sequence belongs to the four-carbon acid sugar kinase family.

The enzyme catalyses 3-dehydro-L-erythronate + ATP = 3-dehydro-4-O-phospho-L-erythronate + ADP + H(+). The catalysed reaction is 3-dehydro-D-erythronate + ATP = 3-dehydro-4-O-phospho-D-erythronate + ADP + H(+). Functionally, catalyzes the ATP-dependent phosphorylation of 3-oxo-tetronate to 3-oxo-tetronate 4-phosphate. This Pseudomonas fluorescens (strain ATCC BAA-477 / NRRL B-23932 / Pf-5) protein is 3-oxo-tetronate kinase.